A 451-amino-acid chain; its full sequence is Nicotinamide phosphoribosyltransferase (451 aa).

R209 is a binding site for diphosphate. D232 is a binding site for beta-nicotinamide D-ribonucleotide. H248 and R309 together coordinate diphosphate. Residues 309 to 311 (RPD), 364 to 365 (GD), and R403 each bind beta-nicotinamide D-ribonucleotide.

This sequence belongs to the NAPRTase family.

The catalysed reaction is beta-nicotinamide D-ribonucleotide + diphosphate = 5-phospho-alpha-D-ribose 1-diphosphate + nicotinamide + H(+). It participates in cofactor biosynthesis; NAD(+) biosynthesis; nicotinamide D-ribonucleotide from 5-phospho-alpha-D-ribose 1-diphosphate and nicotinamide: step 1/1. Catalyzes the condensation of nicotinamide with 5-phosphoribosyl-1-pyrophosphate to yield nicotinamide mononucleotide, an intermediate in the biosynthesis of NAD. The chain is Nicotinamide phosphoribosyltransferase from Mycoplasma pneumoniae (strain ATCC 29342 / M129 / Subtype 1) (Mycoplasmoides pneumoniae).